We begin with the raw amino-acid sequence, 395 residues long: MAKEKFERKKPHVNIGTIGHVDHGKTTLTAAITAVLAKQGKAQARAYDQIDAAPEERERGITISTSHVEYETDNRHYAHVDCPGHADYVKNMITGAAQMDGAILVVSAADGPMPQTREHILLSRQVGVPYIVVFLNKCDMVDDEELLELVEMEVRDLLSEYDFPGDEVPVIKGSALKALEGDPQWEEKIIELMNAVDEYIPTPQREIDKPFMMPIEDVFSITGRGTVATGRVERGTLKVGDAVEIVGLADEPKSTTVTGVEMFRKLLDQAEAGDNIGALLRGVSRDEVERGQVLAKPGSITPHTKFKAQVYVLTKEEGGRHTPFFSNYRPQFYFRTTDVTGIITLPEGVEMVMPGDNVEMTVELIAPIAIEEGTKFSIREGGRTVGAGSVSEIIE.

The 195-residue stretch at 10-204 folds into the tr-type G domain; that stretch reads KPHVNIGTIG…AVDEYIPTPQ (195 aa). The G1 stretch occupies residues 19–26; the sequence is GHVDHGKT. 19–26 serves as a coordination point for GTP; it reads GHVDHGKT. Position 26 (Thr26) interacts with Mg(2+). Residues 60–64 form a G2 region; the sequence is GITIS. Positions 81 to 84 are G3; that stretch reads DCPG. GTP is bound by residues 81–85 and 136–139; these read DCPGH and NKCD. The segment at 136 to 139 is G4; it reads NKCD. The tract at residues 174–176 is G5; it reads SAL.

Belongs to the TRAFAC class translation factor GTPase superfamily. Classic translation factor GTPase family. EF-Tu/EF-1A subfamily. Monomer.

It localises to the cytoplasm. The enzyme catalyses GTP + H2O = GDP + phosphate + H(+). In terms of biological role, GTP hydrolase that promotes the GTP-dependent binding of aminoacyl-tRNA to the A-site of ribosomes during protein biosynthesis. The polypeptide is Elongation factor Tu (Geobacillus sp. (strain WCH70)).